A 303-amino-acid polypeptide reads, in one-letter code: Diaminopimelate epimerase (303 aa).

The substrate site is built by Asn-15, Gln-47, and Asn-67. Cys-76 functions as the Proton donor in the catalytic mechanism. Substrate-binding positions include 77 to 78, Asn-163, Asn-197, and 215 to 216; these read GN and ER. Cys-224 serves as the catalytic Proton acceptor. 225–226 contacts substrate; that stretch reads GS.

It belongs to the diaminopimelate epimerase family. As to quaternary structure, homodimer.

It is found in the cytoplasm. It carries out the reaction (2S,6S)-2,6-diaminopimelate = meso-2,6-diaminopimelate. Its pathway is amino-acid biosynthesis; L-lysine biosynthesis via DAP pathway; DL-2,6-diaminopimelate from LL-2,6-diaminopimelate: step 1/1. In terms of biological role, catalyzes the stereoinversion of LL-2,6-diaminopimelate (L,L-DAP) to meso-diaminopimelate (meso-DAP), a precursor of L-lysine and an essential component of the bacterial peptidoglycan. The polypeptide is Diaminopimelate epimerase (Allorhizobium ampelinum (strain ATCC BAA-846 / DSM 112012 / S4) (Agrobacterium vitis (strain S4))).